We begin with the raw amino-acid sequence, 369 residues long: DNA replication and repair protein RecF (369 aa).

30-37 (GDNGSGKT) contributes to the ATP binding site.

The protein belongs to the RecF family.

The protein resides in the cytoplasm. Its function is as follows. The RecF protein is involved in DNA metabolism; it is required for DNA replication and normal SOS inducibility. RecF binds preferentially to single-stranded, linear DNA. It also seems to bind ATP. This Pseudomonas paraeruginosa (strain DSM 24068 / PA7) (Pseudomonas aeruginosa (strain PA7)) protein is DNA replication and repair protein RecF.